Consider the following 390-residue polypeptide: Succinyl-diaminopimelate desuccinylase (390 aa).

Position 74 (histidine 74) interacts with Zn(2+). Aspartate 76 is a catalytic residue. Aspartate 107 serves as a coordination point for Zn(2+). The Proton acceptor role is filled by glutamate 140. Zn(2+) is bound by residues glutamate 141, glutamate 169, and histidine 363.

This sequence belongs to the peptidase M20A family. DapE subfamily. Homodimer. The cofactor is Zn(2+). Co(2+) serves as cofactor.

The catalysed reaction is N-succinyl-(2S,6S)-2,6-diaminopimelate + H2O = (2S,6S)-2,6-diaminopimelate + succinate. The protein operates within amino-acid biosynthesis; L-lysine biosynthesis via DAP pathway; LL-2,6-diaminopimelate from (S)-tetrahydrodipicolinate (succinylase route): step 3/3. Functionally, catalyzes the hydrolysis of N-succinyl-L,L-diaminopimelic acid (SDAP), forming succinate and LL-2,6-diaminopimelate (DAP), an intermediate involved in the bacterial biosynthesis of lysine and meso-diaminopimelic acid, an essential component of bacterial cell walls. In Bartonella bacilliformis (strain ATCC 35685 / KC583 / Herrer 020/F12,63), this protein is Succinyl-diaminopimelate desuccinylase.